The sequence spans 1423 residues: Protein phosphatase Slingshot homolog 2 (1423 aa).

Residues 1-37 are disordered; it reads MALVTVQRSPTPSTTSSPCASEADSGEEECRSQPRSI. The segment covering 9 to 18 has biased composition (low complexity); it reads SPTPSTTSSP. 3 positions are modified to phosphoserine: S17, S25, and S36. In terms of domain architecture, DEK-C spans 248-303; that stretch reads ERTERLIKTKLREIMMQKDLENITSKEIRTELEMQMVCNLREFKEFIDNEMIVILG. One can recognise a Tyrosine-protein phosphatase domain in the interval 307–448; that stretch reads SPTQIFEHVF…LEEYQGILLA (142 aa). The active-site Phosphocysteine intermediate is the C392. S461, S487, S534, S631, and S633 each carry phosphoserine. 10 disordered regions span residues 617-641, 664-684, 696-728, 797-825, 840-862, 877-954, 962-981, 1019-1041, 1070-1108, and 1144-1179; these read TSPL…CQTE, QETR…GGRN, PSKV…QSKA, ENKP…MCNP, EGEP…AKWY, LRQE…NATV, FDHL…TQQE, TSPN…EQGL, SLHP…SSLS, and TEQS…YKDS. A compositionally biased stretch (pro residues) spans 621-635; the sequence is KDPPMSPDPESPSPQ. Over residues 664–680 the composition is skewed to basic and acidic residues; it reads QETRSRSFSHSRMEELG. Residues 889–904 show a composition bias toward polar residues; that stretch reads TCTSLSTRKNSKNDSS. Over residues 910–932 the composition is skewed to basic and acidic residues; that stretch reads PKGKSDEAPPEHSFVLKEPEMSK. Residues 941–953 are compositionally biased toward polar residues; that stretch reads EAGSLSHSEQNAT. Over residues 1019–1034 the composition is skewed to polar residues; that stretch reads TSPNHTGPGSEIATSE. The span at 1144 to 1172 shows a compositional bias: polar residues; it reads TEQSSTTDEPSAEQVSWEESQESPLSSGS. S1217 is subject to Phosphoserine. T1422 carries the phosphothreonine modification.

The protein belongs to the protein-tyrosine phosphatase family. Interacts with filamentous actin.

The protein localises to the cytoplasm. It localises to the cytoskeleton. It is found in the cell junction. Its subcellular location is the focal adhesion. The protein resides in the cytoplasmic vesicle. The protein localises to the secretory vesicle. It localises to the acrosome. It catalyses the reaction O-phospho-L-tyrosyl-[protein] + H2O = L-tyrosyl-[protein] + phosphate. The enzyme catalyses O-phospho-L-seryl-[protein] + H2O = L-seryl-[protein] + phosphate. It carries out the reaction O-phospho-L-threonyl-[protein] + H2O = L-threonyl-[protein] + phosphate. Protein phosphatase which regulates actin filament dynamics. Dephosphorylates and activates the actin binding/depolymerizing factor cofilin, which subsequently binds to actin filaments and stimulates their disassembly. Inhibitory phosphorylation of cofilin is mediated by LIMK1, which may also be dephosphorylated and inactivated by this protein. Required for spermatogenesis. Involved in acrosome biogenesis, probably by regulating cofilin-mediated actin cytoskeleton remodeling during proacrosomal vesicle fusion and/or Golgi to perinuclear vesicle trafficking. This Homo sapiens (Human) protein is Protein phosphatase Slingshot homolog 2 (SSH2).